Reading from the N-terminus, the 214-residue chain is Pyridoxine/pyridoxamine 5'-phosphate oxidase (214 aa).

Substrate-binding positions include 8–11 (RINY) and Lys66. Residues 61 to 66 (RIVLIK), 76 to 77 (FT), Arg82, Lys83, and Gln105 contribute to the FMN site. Positions 123, 127, and 131 each coordinate substrate. Residues 140–141 (QS) and Trp184 each bind FMN. 190–192 (RLH) is a substrate binding site. FMN is bound at residue Arg194.

This sequence belongs to the pyridoxamine 5'-phosphate oxidase family. Homodimer. FMN serves as cofactor.

The enzyme catalyses pyridoxamine 5'-phosphate + O2 + H2O = pyridoxal 5'-phosphate + H2O2 + NH4(+). It carries out the reaction pyridoxine 5'-phosphate + O2 = pyridoxal 5'-phosphate + H2O2. The protein operates within cofactor metabolism; pyridoxal 5'-phosphate salvage; pyridoxal 5'-phosphate from pyridoxamine 5'-phosphate: step 1/1. It functions in the pathway cofactor metabolism; pyridoxal 5'-phosphate salvage; pyridoxal 5'-phosphate from pyridoxine 5'-phosphate: step 1/1. In terms of biological role, catalyzes the oxidation of either pyridoxine 5'-phosphate (PNP) or pyridoxamine 5'-phosphate (PMP) into pyridoxal 5'-phosphate (PLP). The protein is Pyridoxine/pyridoxamine 5'-phosphate oxidase of Burkholderia orbicola (strain MC0-3).